We begin with the raw amino-acid sequence, 733 residues long: Protein PAT1 homolog 2 (733 aa).

2 disordered regions span residues 42 to 75 (LDQE…PEAL) and 337 to 366 (LHPQ…PDPY). Over residues 49–59 (EPVKLEDDHTK) the composition is skewed to basic and acidic residues. Residues 346–356 (SQRQRPQSSSR) show a composition bias toward low complexity.

The protein belongs to the PAT1 family. As to quaternary structure, interacts with ribonucleoprotein complex components. Interacts with cpeb. Oocyte-specific protein. Expressed throughout oogenesis but is not detectable in eggs, embryos, nor in adult tissues (at protein level).

The protein localises to the cytoplasm. Its subcellular location is the nucleus. Functionally, RNA-binding protein that acts as a translational repressor. When overexpressed, able to disperse P-bodies. This chain is Protein PAT1 homolog 2 (patl2), found in Xenopus laevis (African clawed frog).